The following is a 313-amino-acid chain: Formimidoylglutamase (313 aa).

Mn(2+)-binding residues include His-130, Asp-155, His-157, Asp-159, Asp-241, and Asp-243.

The protein belongs to the arginase family. Mn(2+) serves as cofactor.

The catalysed reaction is N-formimidoyl-L-glutamate + H2O = formamide + L-glutamate. Its pathway is amino-acid degradation; L-histidine degradation into L-glutamate; L-glutamate from N-formimidoyl-L-glutamate (hydrolase route): step 1/1. Its function is as follows. Catalyzes the conversion of N-formimidoyl-L-glutamate to L-glutamate and formamide. This is Formimidoylglutamase from Salmonella typhi.